Consider the following 476-residue polypeptide: Glutathione synthetase (476 aa).

Arginine 117 provides a ligand contact to substrate. Glutamate 137 contacts ATP. Positions 137 and 139 each coordinate Mg(2+). Substrate contacts are provided by residues 141 to 144 (ISSS), 211 to 213 (ERN), glutamine 217, and 267 to 270 (RAGY). ATP-binding positions include lysine 308, 367–376 (KPQREGGGNN), tyrosine 378, 400–403 (MDKI), and glutamate 426. A Mg(2+)-binding site is contributed by glutamate 371. Arginine 452 is a substrate binding site. ATP-binding residues include lysine 454 and glutamate 460. Substrate is bound at residue 463 to 464 (VA).

This sequence belongs to the eukaryotic GSH synthase family. As to quaternary structure, homodimer. The cofactor is Mg(2+).

The enzyme catalyses gamma-L-glutamyl-L-cysteine + glycine + ATP = glutathione + ADP + phosphate + H(+). It participates in sulfur metabolism; glutathione biosynthesis; glutathione from L-cysteine and L-glutamate: step 2/2. This chain is Glutathione synthetase (gshB), found in Dictyostelium discoideum (Social amoeba).